A 534-amino-acid chain; its full sequence is NAD(P)H-quinone oxidoreductase chain 4 (534 aa).

The next 14 helical transmembrane spans lie at 6–26 (FPWL…LPFI), 38–58 (WYAL…FYTQ), 91–111 (MPLI…SWPV), 117–137 (LFYF…AVQD), 138–158 (LLVF…LLSI), 171–191 (FILY…AMAF), 214–234 (LLCY…VPLH), 245–265 (TAPV…YALI), 279–299 (FAPA…LTSF), 316–336 (MGFV…GAVL), 337–357 (QMVS…ATYD), 377–399 (IFAM…GFVA), 419–439 (VPVV…LLSM), and 466–486 (IFVI…PKII).

It belongs to the complex I subunit 4 family.

The protein resides in the cellular thylakoid membrane. The catalysed reaction is a plastoquinone + NADH + (n+1) H(+)(in) = a plastoquinol + NAD(+) + n H(+)(out). It catalyses the reaction a plastoquinone + NADPH + (n+1) H(+)(in) = a plastoquinol + NADP(+) + n H(+)(out). Its function is as follows. NDH-1 shuttles electrons from NAD(P)H, via FMN and iron-sulfur (Fe-S) centers, to quinones in the respiratory chain. The immediate electron acceptor for the enzyme in this species is believed to be plastoquinone. Couples the redox reaction to proton translocation (for every two electrons transferred, four hydrogen ions are translocated across the cytoplasmic membrane), and thus conserves the redox energy in a proton gradient. This Acaryochloris marina (strain MBIC 11017) protein is NAD(P)H-quinone oxidoreductase chain 4.